The chain runs to 269 residues: uncharacterized protein (269 aa).

The segment at residues 3–105 is a DNA-binding region (ompR/PhoB-type); sequence WIINDNIEFW…VPRRGFKIHN (103 aa).

The protein to V.cholerae cholera toxin transcriptional activator (ToxR).

This is an uncharacterized protein from Escherichia coli (strain K12).